We begin with the raw amino-acid sequence, 46 residues long: Apamin (46 aa).

The first 27 residues, 1-27 (MISMLRCISLFLSVILITGYFVTPVMS), serve as a signal peptide directing secretion. 2 disulfides stabilise this stretch: Cys28-Cys38 and Cys30-Cys42. An essential for toxin activity region spans residues 40 to 41 (RR). The residue at position 45 (His45) is a Histidine amide.

As to expression, expressed by the venom gland.

It is found in the secreted. In terms of biological role, neurotoxin that blocks voltage-independent calcium-activated potassium channels (KCNN1=SK1, KCNN2=SK2, KCNN3=SK3). This chain is Apamin, found in Apis cerana cerana (Oriental honeybee).